Consider the following 1028-residue polypeptide: Contactin-6 (1028 aa).

The first 19 residues, 1–19 (MRLLWKLVILLPLINSCAG), serve as a signal peptide directing secretion. Ig-like C2-type domains lie at 32 to 117 (PQDV…AKLQ), 122 to 208 (EDFE…RSVQ), 227 to 308 (PKIE…RNLA), 318 to 402 (PEWE…AELR), 408 to 495 (PDFS…GSLI), and 499 to 587 (RTVI…ERLS). 6 disulfide bridges follow: Cys-50–Cys-100, Cys-144–Cys-196, Cys-249–Cys-297, Cys-339–Cys-386, Cys-431–Cys-479, and Cys-521–Cys-577. N-linked (GlcNAc...) asparagine glycans are attached at residues Asn-65 and Asn-193. Asn-368, Asn-377, and Asn-468 each carry an N-linked (GlcNAc...) asparagine glycan. 4 Fibronectin type-III domains span residues 600-698 (PPED…TKAS), 703-800 (APVN…SGED), 805-901 (APRG…TKKS), and 902-996 (PPSQ…KMSS). Asn-659, Asn-765, Asn-860, and Asn-865 each carry an N-linked (GlcNAc...) asparagine glycan. Tyr-882 carries the phosphotyrosine modification. Polar residues predominate over residues 887–902 (TGPSSPPVNVTTKKSP). Positions 887–908 (TGPSSPPVNVTTKKSPPSQPPA) are disordered. Residues Asn-895, Asn-931, Asn-956, and Asn-957 are each glycosylated (N-linked (GlcNAc...) asparagine). A lipid anchor (GPI-anchor amidated serine) is attached at Ser-999. A propeptide spans 1000–1028 (VGVQILKPSTQFLTMVGFFYCFVIQPLSR) (removed in mature form).

Belongs to the immunoglobulin superfamily. Contactin family. As to quaternary structure, interacts with PTPRG. As to expression, specifically expressed in neuronal cells. In brain, it is expressed in spinal cord, cerebrum and cerebellum. At 17 dpc, it is expressed in hippocampus, cerebellum, and the brain stem. Strongly expressed after birth with a maximum level between P1 and P21, which corresponds to the time frame of oligodendrogliogenesis.

Its subcellular location is the cell membrane. In terms of biological role, contactins mediate cell surface interactions during nervous system development. Participates in oligodendrocytes generation by acting as a ligand of NOTCH1. Its association with NOTCH1 promotes NOTCH1 activation through the released notch intracellular domain (NICD) and subsequent translocation to the nucleus. May be involved in motor coordination. This Rattus norvegicus (Rat) protein is Contactin-6 (Cntn6).